A 408-amino-acid polypeptide reads, in one-letter code: Peptidase T (408 aa).

His-78 serves as a coordination point for Zn(2+). The active site involves Asp-80. Asp-141 serves as a coordination point for Zn(2+). Glu-175 functions as the Proton acceptor in the catalytic mechanism. Zn(2+) contacts are provided by Glu-176, Asp-198, and His-380.

This sequence belongs to the peptidase M20B family. Requires Zn(2+) as cofactor.

It localises to the cytoplasm. It catalyses the reaction Release of the N-terminal residue from a tripeptide.. In terms of biological role, cleaves the N-terminal amino acid of tripeptides. This chain is Peptidase T, found in Clostridium acetobutylicum (strain ATCC 824 / DSM 792 / JCM 1419 / IAM 19013 / LMG 5710 / NBRC 13948 / NRRL B-527 / VKM B-1787 / 2291 / W).